Reading from the N-terminus, the 427-residue chain is Serine--tRNA ligase (427 aa).

Position 231-233 (231-233 (TAE)) interacts with L-serine. Residue 262–264 (RSE) participates in ATP binding. Glutamate 285 contributes to the L-serine binding site. ATP is bound at residue 349-352 (EISS). Serine 385 provides a ligand contact to L-serine.

Belongs to the class-II aminoacyl-tRNA synthetase family. Type-1 seryl-tRNA synthetase subfamily. As to quaternary structure, homodimer. The tRNA molecule binds across the dimer.

The protein localises to the cytoplasm. It carries out the reaction tRNA(Ser) + L-serine + ATP = L-seryl-tRNA(Ser) + AMP + diphosphate + H(+). It catalyses the reaction tRNA(Sec) + L-serine + ATP = L-seryl-tRNA(Sec) + AMP + diphosphate + H(+). It participates in aminoacyl-tRNA biosynthesis; selenocysteinyl-tRNA(Sec) biosynthesis; L-seryl-tRNA(Sec) from L-serine and tRNA(Sec): step 1/1. Functionally, catalyzes the attachment of serine to tRNA(Ser). Is also able to aminoacylate tRNA(Sec) with serine, to form the misacylated tRNA L-seryl-tRNA(Sec), which will be further converted into selenocysteinyl-tRNA(Sec). The chain is Serine--tRNA ligase from Sinorhizobium fredii (strain NBRC 101917 / NGR234).